A 160-amino-acid chain; its full sequence is Cyclic pyranopterin monophosphate synthase (160 aa).

Residues 74 to 76 (LSH) and 112 to 113 (ME) each bind substrate. Asp127 is an active-site residue.

Belongs to the MoaC family. In terms of assembly, homohexamer; trimer of dimers.

The enzyme catalyses (8S)-3',8-cyclo-7,8-dihydroguanosine 5'-triphosphate = cyclic pyranopterin phosphate + diphosphate. It functions in the pathway cofactor biosynthesis; molybdopterin biosynthesis. Catalyzes the conversion of (8S)-3',8-cyclo-7,8-dihydroguanosine 5'-triphosphate to cyclic pyranopterin monophosphate (cPMP). The polypeptide is Cyclic pyranopterin monophosphate synthase (Trichlorobacter lovleyi (strain ATCC BAA-1151 / DSM 17278 / SZ) (Geobacter lovleyi)).